A 330-amino-acid chain; its full sequence is Aspartate--ammonia ligase (330 aa).

Belongs to the class-II aminoacyl-tRNA synthetase family. AsnA subfamily.

It localises to the cytoplasm. It catalyses the reaction L-aspartate + NH4(+) + ATP = L-asparagine + AMP + diphosphate + H(+). The protein operates within amino-acid biosynthesis; L-asparagine biosynthesis; L-asparagine from L-aspartate (ammonia route): step 1/1. This chain is Aspartate--ammonia ligase, found in Klebsiella pneumoniae subsp. pneumoniae (strain ATCC 700721 / MGH 78578).